Here is a 411-residue protein sequence, read N- to C-terminus: Serine hydroxymethyltransferase (411 aa).

(6S)-5,6,7,8-tetrahydrofolate is bound at residue 120 to 122 (GHL). Lys225 carries the N6-(pyridoxal phosphate)lysine modification. Position 350–352 (350–352 (SPF)) interacts with (6S)-5,6,7,8-tetrahydrofolate.

The protein belongs to the SHMT family. As to quaternary structure, homodimer. Requires pyridoxal 5'-phosphate as cofactor.

Its subcellular location is the cytoplasm. The catalysed reaction is (6R)-5,10-methylene-5,6,7,8-tetrahydrofolate + glycine + H2O = (6S)-5,6,7,8-tetrahydrofolate + L-serine. It functions in the pathway one-carbon metabolism; tetrahydrofolate interconversion. The protein operates within amino-acid biosynthesis; glycine biosynthesis; glycine from L-serine: step 1/1. Its function is as follows. Catalyzes the reversible interconversion of serine and glycine with tetrahydrofolate (THF) serving as the one-carbon carrier. This reaction serves as the major source of one-carbon groups required for the biosynthesis of purines, thymidylate, methionine, and other important biomolecules. Also exhibits THF-independent aldolase activity toward beta-hydroxyamino acids, producing glycine and aldehydes, via a retro-aldol mechanism. The chain is Serine hydroxymethyltransferase from Lactobacillus acidophilus (strain ATCC 700396 / NCK56 / N2 / NCFM).